We begin with the raw amino-acid sequence, 267 residues long: Protein isy-1 (267 aa).

The stretch at 175-204 (LEKLIEEKNIERINKEFAEKQAQKQQTASD) forms a coiled coil. A disordered region spans residues 195 to 221 (QAQKQQTASDAAPENIYKVEEDDDDDL).

The protein belongs to the ISY1 family. Ubiquitously expressed.

Its subcellular location is the nucleus. Its function is as follows. Regulates the processing of the mir-60 microRNA (miRNA), which in turn negatively regulates the expression of the transcription factor zip-10. Does not affect the splicing of zip-10. This Caenorhabditis elegans protein is Protein isy-1.